A 1365-amino-acid chain; its full sequence is Serine/threonine-protein kinase LMTK1 (1365 aa).

The chain crosses the membrane as a helical span at residues 32–52; the sequence is LAVVAVSFSGIFTVVILMLAC. Residues 126 to 396 enclose the Protein kinase domain; the sequence is LLYLKEIGHG…PTAEEVHLLL (271 aa). Residues 132–140 and lysine 157 contribute to the ATP site; that span reads IGHGWFGKV. Catalysis depends on aspartate 254, which acts as the Proton acceptor. Phosphoserine is present on serine 500. 5 disordered regions span residues 550–623, 638–698, 791–1186, 1237–1293, and 1343–1365; these read PDCA…LPAE, DDPL…GYVS, QEAE…PAVP, ESPT…EWDG, and ISDSDAQSVGGPAAGAGGRYTEA. Residues 560–575 show a composition bias toward polar residues; that stretch reads QAVTDQDNNSEESTVA. Composition is skewed to low complexity over residues 638–655 and 675–686; these read DDPLGASPSGSPGAQPSP and SSNMSANNNSAS. Polar residues-rich tracts occupy residues 848–860 and 869–879; these read LESSGSSLGQEAP and EATSGVFTDLS. Low complexity-rich tracts occupy residues 904-918 and 981-993; these read PDSLDSLDIPSSASD and PLLSVSLGGLSKK. The span at 1015 to 1030 shows a compositional bias: basic and acidic residues; that stretch reads PEKHSGIQDSQKEQDL. A Phosphoserine modification is found at serine 1035. Residues 1037–1053 are compositionally biased toward polar residues; that stretch reads GHQSVQAFPRSAVSSEV. Over residues 1072-1083 the composition is skewed to low complexity; it reads PLGAQGPVGVQP. Over residues 1104 to 1132 the composition is skewed to polar residues; that stretch reads GSGTEPQGPSGQLSGRAQQGQMGNPSTPR. The segment covering 1150–1164 has biased composition (acidic residues); the sequence is PEEDEDTEDSEESDE. Threonine 1156 carries the phosphothreonine modification. Serine 1159, serine 1162, serine 1175, serine 1178, and serine 1253 each carry phosphoserine. Residues 1354 to 1365 show a composition bias toward gly residues; it reads PAAGAGGRYTEA.

It belongs to the protein kinase superfamily. Tyr protein kinase family. Interacts with CDK5. Post-translationally, autophosphorylated. Phosphorylated by CDK5. In terms of tissue distribution, expressed in brain, and, to a lower extent, in kidney, heart, lung and skeletal muscle. In the brain, expressed in the olfactory bulb, cerebellum, striatum, hippocampal formation, thalamus, hypothalamus, and pontine nuclei (at protein level).

It localises to the membrane. It is found in the cytoplasm. Its subcellular location is the perinuclear region. The protein resides in the cell projection. The protein localises to the dendrite. It localises to the axon. It is found in the growth cone. It carries out the reaction L-seryl-[protein] + ATP = O-phospho-L-seryl-[protein] + ADP + H(+). The catalysed reaction is L-threonyl-[protein] + ATP = O-phospho-L-threonyl-[protein] + ADP + H(+). Its function is as follows. May be involved in neuronal differentiation. The polypeptide is Serine/threonine-protein kinase LMTK1 (Aatk) (Mus musculus (Mouse)).